Consider the following 448-residue polypeptide: Ribulose bisphosphate carboxylase large chain (448 aa).

A propeptide spanning residues 1-2 (MS) is cleaved from the precursor. P3 is modified (N-acetylproline). K14 bears the N6,N6,N6-trimethyllysine mark. Residues N122 and T172 each coordinate substrate. Catalysis depends on K174, which acts as the Proton acceptor. Residue K176 participates in substrate binding. Residues K200, D202, and E203 each coordinate Mg(2+). K200 is subject to N6-carboxylysine. H293 (proton acceptor) is an active-site residue. Residues R294, H326, and S378 each contribute to the substrate site.

This sequence belongs to the RuBisCO large chain family. Type I subfamily. Heterohexadecamer of 8 large chains and 8 small chains; disulfide-linked. The disulfide link is formed within the large subunit homodimers. The cofactor is Mg(2+). Post-translationally, the disulfide bond which can form in the large chain dimeric partners within the hexadecamer appears to be associated with oxidative stress and protein turnover.

It localises to the plastid. The protein localises to the chloroplast. The catalysed reaction is 2 (2R)-3-phosphoglycerate + 2 H(+) = D-ribulose 1,5-bisphosphate + CO2 + H2O. It catalyses the reaction D-ribulose 1,5-bisphosphate + O2 = 2-phosphoglycolate + (2R)-3-phosphoglycerate + 2 H(+). Its function is as follows. RuBisCO catalyzes two reactions: the carboxylation of D-ribulose 1,5-bisphosphate, the primary event in carbon dioxide fixation, as well as the oxidative fragmentation of the pentose substrate in the photorespiration process. Both reactions occur simultaneously and in competition at the same active site. This chain is Ribulose bisphosphate carboxylase large chain, found in Dichapetalum crassifolium.